Consider the following 224-residue polypeptide: Oxalate oxidase 2 (224 aa).

Positions 1-23 (MGYSKTLAVSLFAVLLLAPAVLA) are cleaved as a signal peptide. Cys33 and Cys49 are oxidised to a cystine. In terms of domain architecture, Cupin type-1 spans 63-214 (SKLAKAGNTS…ALRVEAGVVE (152 aa)). N-linked (GlcNAc...) asparagine glycosylation is found at Asn70 and Asn75. Positions 111, 113, 118, and 160 each coordinate Mn(2+).

This sequence belongs to the germin family. In terms of assembly, oligomer (believed to be a pentamer but probably hexamer). Glycosylated. A form called G contains antennary GlcNAc residues, whereas a form called G' lacks antennary GlcNAc residues in its otherwise identical glycans. In terms of tissue distribution, root.

The protein resides in the secreted. The protein localises to the extracellular space. It is found in the apoplast. Its subcellular location is the cell wall. The enzyme catalyses oxalate + O2 + 2 H(+) = H2O2 + 2 CO2. In terms of biological role, releases hydrogen peroxide in the apoplast. May play an important role in several aspects of plant growth and defense mechanisms. The polypeptide is Oxalate oxidase 2 (Hordeum vulgare (Barley)).